The primary structure comprises 1077 residues: Disheveled-associated activator of morphogenesis 1 (1077 aa).

Serine 34 is subject to Phosphoserine. Residues 45–420 (LPMPPVEELD…QIVIQNDKGQ (376 aa)) enclose the GBD/FH3 domain. The stretch at 437 to 526 (RMLVNENEVK…ELNRRAVCAA (90 aa)) forms a coiled coil. Disordered stretches follow at residues 457 to 478 (KEHN…AKTQ) and 526 to 596 (AVPG…PVSL). The 72-residue stretch at 528–599 (PGGPSPGAPG…PGAPVSLTLK (72 aa)) folds into the FH1 domain. 2 stretches are compositionally biased toward pro residues: residues 530–539 (GPSPGAPGGP) and 549–592 (LPPP…PPGA). The 409-residue stretch at 600 to 1008 (KKNIPQPTNA…EERRARLEAQ (409 aa)) folds into the FH2 domain. An actin-binding region spans residues 693–702 (QNCNILLSRL). Residues 1007-1026 (AQLKEQRERERKVRKAKESS) are compositionally biased toward basic and acidic residues. Disordered stretches follow at residues 1007 to 1033 (AQLK…GEFD) and 1056 to 1077 (RKRI…KLNF). Serine 1026 and serine 1029 each carry phosphoserine. One can recognise a DAD domain in the interval 1026-1057 (SEESGEFDDLVSALRSGEVFDKDLSKLKRNRK). The span at 1066–1077 (SSRERPITKLNF) shows a compositional bias: basic and acidic residues.

It belongs to the formin homology family. In terms of assembly, interacts with CIP4, FNBP1 and FNBP1L. Interacts with the SH3 domains of Abl, BTK, endophilin, spectrin and SRC. Binds specifically to GTP-bound CDC42 and RHOA. Interacts with INTU; INTU mediates the indirect interaction between DAAM1 and NPHP4. Interacts (via coiled coil domain) with KANK1 (via coiled coil domain). As to expression, in early embryogenesis, expressed in embryonic and extraembryonic ectoderm. In later stages of gastrulation, expressed also in somites and ribs and posterior vertebrae of developing skeletal system. During organogenesis, expressed in CNS, PNS, stomach, liver and limb bud.

The protein resides in the cytoplasm. It localises to the cytoskeleton. Its subcellular location is the cilium basal body. Functionally, binds to disheveled (Dvl) and Rho, and mediates Wnt-induced Dvl-Rho complex formation. May play a role as a scaffolding protein to recruit Rho-GDP and Rho-GEF, thereby enhancing Rho-GTP formation. Can direct nucleation and elongation of new actin filaments. Involved in building functional cilia. Involved in the organization of the subapical actin network in multiciliated epithelial cells. Together with DAAM2, required for myocardial maturation and sarcomere assembly. During cell division, may regulate RHOA activation that signals spindle orientation and chromosomal segregation. This Mus musculus (Mouse) protein is Disheveled-associated activator of morphogenesis 1 (Daam1).